The chain runs to 219 residues: 7-cyano-7-deazaguanine synthase (219 aa).

10 to 20 (FSGGQDSTTCL) serves as a coordination point for ATP. 4 residues coordinate Zn(2+): cysteine 188, cysteine 196, cysteine 199, and cysteine 202.

This sequence belongs to the QueC family. Zn(2+) is required as a cofactor.

The enzyme catalyses 7-carboxy-7-deazaguanine + NH4(+) + ATP = 7-cyano-7-deazaguanine + ADP + phosphate + H2O + H(+). Its pathway is purine metabolism; 7-cyano-7-deazaguanine biosynthesis. In terms of biological role, catalyzes the ATP-dependent conversion of 7-carboxy-7-deazaguanine (CDG) to 7-cyano-7-deazaguanine (preQ(0)). The chain is 7-cyano-7-deazaguanine synthase from Neisseria meningitidis serogroup A / serotype 4A (strain DSM 15465 / Z2491).